The sequence spans 414 residues: EARP and GARP complex-interacting protein 1 (414 aa).

Met-1 bears the N-acetylmethionine mark. WD repeat units follow at residues 159 to 199, 209 to 249, 253 to 293, and 297 to 337; these read TAHG…SQAV, KGQL…QIYC, AHGQ…EPVK, and EHSH…SEPF. Residues 337-362 are disordered; it reads FGHLVDDDDISDQEDHRSEEKSKEPL. Residue Ser-347 is modified to Phosphoserine. Positions 349 to 362 are enriched in basic and acidic residues; sequence QEDHRSEEKSKEPL. The WD 5 repeat unit spans residues 372–412; the sequence is EHEDSVYAVDWSSADPWLFASLSYDGRLVINRVPRALKYHI.

It belongs to the WD repeat EIPR1 family. Interacts with two multisubunit tethering complexes: EARP composed of VPS50, VPS51, VPS52 and VPS53 subunits and GARP complex composed of VPS51, VPS52, VPS53 and VPS54 subunits. Interacts with SNAP29.

The protein resides in the golgi apparatus. It is found in the trans-Golgi network. In terms of biological role, acts as a component of endosomal retrieval machinery that is involved in protein transport from early endosomes to either recycling endosomes or the trans-Golgi network. Mediates the recruitment of Golgi-associated retrograde protein (GARP) complex to the trans-Golgi network and controls early endosome-to-Golgi transport of internalized protein. Promotes the recycling of internalized transferrin receptor (TFRC) to the plasma membrane through interaction with endosome-associated recycling protein (EARP) complex. Controls proper insulin distribution and secretion, and retention of cargo in mature dense core vesicles. Required for the stability of the endosome-associated retrograde protein (EARP) complex subunits and for proper localization and association of EARP with membranes. The protein is EARP and GARP complex-interacting protein 1 of Pongo abelii (Sumatran orangutan).